The following is a 259-amino-acid chain: Global transcriptional regulator CodY (259 aa).

Residues 1-155 (MELLAKTRKL…SSTVVGMEIL (155 aa)) form a GAF domain region. Positions 203-222 (ASKIADRVGITRSVIVNALR) form a DNA-binding region, H-T-H motif. Position 215 is a phosphoserine (S215).

This sequence belongs to the CodY family.

The protein localises to the cytoplasm. DNA-binding global transcriptional regulator which is involved in the adaptive response to starvation and acts by directly or indirectly controlling the expression of numerous genes in response to nutrient availability. During rapid exponential growth, CodY is highly active and represses genes whose products allow adaptation to nutrient depletion. In Bacillus anthracis (strain A0248), this protein is Global transcriptional regulator CodY.